We begin with the raw amino-acid sequence, 143 residues long: Transcriptional regulator MraZ (143 aa).

SpoVT-AbrB domains lie at 5-47 and 76-119; these read EYNH…SMDE and ATEC…SSDQ.

Belongs to the MraZ family. Forms oligomers.

Its subcellular location is the cytoplasm. The protein localises to the nucleoid. This is Transcriptional regulator MraZ from Alkaliphilus metalliredigens (strain QYMF).